The sequence spans 642 residues: 1-deoxy-D-xylulose-5-phosphate synthase (642 aa).

Residues H79 and 120–122 (GHS) contribute to the thiamine diphosphate site. Residue D151 participates in Mg(2+) binding. Residues 152–153 (GS), N180, Y290, and E372 contribute to the thiamine diphosphate site. Mg(2+) is bound at residue N180.

The protein belongs to the transketolase family. DXPS subfamily. As to quaternary structure, homodimer. Requires Mg(2+) as cofactor. It depends on thiamine diphosphate as a cofactor.

It catalyses the reaction D-glyceraldehyde 3-phosphate + pyruvate + H(+) = 1-deoxy-D-xylulose 5-phosphate + CO2. It functions in the pathway metabolic intermediate biosynthesis; 1-deoxy-D-xylulose 5-phosphate biosynthesis; 1-deoxy-D-xylulose 5-phosphate from D-glyceraldehyde 3-phosphate and pyruvate: step 1/1. Functionally, catalyzes the acyloin condensation reaction between C atoms 2 and 3 of pyruvate and glyceraldehyde 3-phosphate to yield 1-deoxy-D-xylulose-5-phosphate (DXP). This is 1-deoxy-D-xylulose-5-phosphate synthase from Rhodospirillum centenum (strain ATCC 51521 / SW).